A 176-amino-acid chain; its full sequence is Ribosome maturation factor RimM (176 aa).

The PRC barrel domain occupies 96–176; that stretch reads PADEFYWRDL…QILVDWDPDF (81 aa).

The protein belongs to the RimM family. Binds ribosomal protein uS19.

It is found in the cytoplasm. Its function is as follows. An accessory protein needed during the final step in the assembly of 30S ribosomal subunit, possibly for assembly of the head region. Essential for efficient processing of 16S rRNA. May be needed both before and after RbfA during the maturation of 16S rRNA. It has affinity for free ribosomal 30S subunits but not for 70S ribosomes. This chain is Ribosome maturation factor RimM, found in Shewanella baltica (strain OS223).